A 114-amino-acid chain; its full sequence is Large ribosomal subunit protein bL19 (114 aa).

It belongs to the bacterial ribosomal protein bL19 family.

In terms of biological role, this protein is located at the 30S-50S ribosomal subunit interface and may play a role in the structure and function of the aminoacyl-tRNA binding site. In Clostridium botulinum (strain Loch Maree / Type A3), this protein is Large ribosomal subunit protein bL19.